Here is a 232-residue protein sequence, read N- to C-terminus: Aquaporin Z (232 aa).

A run of 2 helical transmembrane segments spans residues 8–28 (AFGT…AAGF) and 33–53 (IGLL…AFAI). The NPA 1 motif lies at 62–64 (NPA). Helical transmembrane passes span 84 to 104 (IIAQ…IATG), 130 to 150 (MLAA…VIMG), and 159 to 179 (GFAP…SIPV). Residues 185-187 (NPA) carry the NPA 2 motif. Residues 201-221 (VSQLWLFWVAPIVGGVLGAVI) traverse the membrane as a helical segment.

The protein belongs to the MIP/aquaporin (TC 1.A.8) family. As to quaternary structure, homotetramer.

Its subcellular location is the cell inner membrane. It carries out the reaction H2O(in) = H2O(out). Channel that permits osmotically driven movement of water in both directions. It is involved in the osmoregulation and in the maintenance of cell turgor during volume expansion in rapidly growing cells. It mediates rapid entry or exit of water in response to abrupt changes in osmolarity. The sequence is that of Aquaporin Z from Vibrio parahaemolyticus serotype O3:K6 (strain RIMD 2210633).